Here is a 411-residue protein sequence, read N- to C-terminus: Tyrosine--tRNA ligase (411 aa).

Residue Tyr-34 coordinates L-tyrosine. The 'HIGH' region signature appears at 39 to 48 (CTATSLHIGS). L-tyrosine is bound by residues Tyr-171 and Gln-175. Residues 231 to 235 (KMGKT) carry the 'KMSKS' region motif. Residue Lys-234 participates in ATP binding. The region spanning 345 to 411 (ISAYKLFYNV…GKKRHILVKV (67 aa)) is the S4 RNA-binding domain.

The protein belongs to the class-I aminoacyl-tRNA synthetase family. TyrS type 1 subfamily. In terms of assembly, homodimer.

The protein resides in the cytoplasm. It catalyses the reaction tRNA(Tyr) + L-tyrosine + ATP = L-tyrosyl-tRNA(Tyr) + AMP + diphosphate + H(+). In terms of biological role, catalyzes the attachment of tyrosine to tRNA(Tyr) in a two-step reaction: tyrosine is first activated by ATP to form Tyr-AMP and then transferred to the acceptor end of tRNA(Tyr). The protein is Tyrosine--tRNA ligase of Rickettsia typhi (strain ATCC VR-144 / Wilmington).